The following is a 139-amino-acid chain: uncharacterized protein (139 aa).

The tract at residues 54–75 is disordered; the sequence is NSLHRHGDQAWGKHRRQNSLKS.

This is an uncharacterized protein from Homo sapiens (Human).